Here is a 376-residue protein sequence, read N- to C-terminus: Cysteine proteinase 2 (376 aa).

The signal sequence occupies residues 1 to 18; the sequence is MRLLVFLILLIFVNFSFA. Residues 19–122 constitute a propeptide, activation peptide; the sequence is NVRPNGRRFS…EVLNVEDLQT (104 aa). 3 disulfide bridges follow: C144–C187, C178–C221, and C279–C365. C147 is an active-site residue. Catalysis depends on residues H286 and N343.

It belongs to the peptidase C1 family.

It is found in the lysosome. Cysteine proteinases 1 and 2 are believed to participate in the breakdown of protein during differentiation of Dictyostelium as a response to starvation. In Dictyostelium discoideum (Social amoeba), this protein is Cysteine proteinase 2 (cprB).